The primary structure comprises 207 residues: Ras-related protein rab7 (207 aa).

GTP is bound by residues 15–22, 34–40, 63–67, 125–128, and 156–157; these read GDSGVGKT, SNQYKAT, DTAGQ, NKID, and AK. The short motif at 37-45 is the Effector region element; it reads YKATIGADF. S-geranylgeranyl cysteine attachment occurs at residues cysteine 205 and cysteine 207. Cysteine 207 bears the Cysteine methyl ester mark.

This sequence belongs to the small GTPase superfamily. Rab family. (Microbial infection) Interacts with Singapore grouper iridoviral proteins VP69 (ORF69) and VP101 (ORF101). Ubiquitously expressed. Expressed in liver, spleen, kidney, brain, intestine, heart, skin, muscle, gill and stomach.

The protein localises to the late endosome membrane. It is found in the lysosome membrane. Its function is as follows. Key regulator in endo-lysosomal trafficking. Governs early-to-late endosomal maturation, microtubule minus-end as well as plus-end directed endosomal migration and positioning, and endosome-lysosome transport through different protein-protein interaction cascades. Plays important roles in microbial pathogen infection and survival, as well as in participating in the life cycle of viruses. In Epinephelus coioides (Orange-spotted grouper), this protein is Ras-related protein rab7.